The primary structure comprises 401 residues: Phosphoglycerate kinase (401 aa).

Substrate-binding positions include 23–25, Arg-39, 62–65, Arg-121, and Arg-154; these read DFN and HLGR. Residues Lys-207, Gly-298, Glu-329, and 355–358 each bind ATP; that span reads GGDT.

Belongs to the phosphoglycerate kinase family. Monomer.

The protein localises to the cytoplasm. The enzyme catalyses (2R)-3-phosphoglycerate + ATP = (2R)-3-phospho-glyceroyl phosphate + ADP. It functions in the pathway carbohydrate degradation; glycolysis; pyruvate from D-glyceraldehyde 3-phosphate: step 2/5. This Campylobacter fetus subsp. fetus (strain 82-40) protein is Phosphoglycerate kinase.